A 335-amino-acid polypeptide reads, in one-letter code: Ketol-acid reductoisomerase (NADP(+)) (335 aa).

The KARI N-terminal Rossmann domain occupies 5-185; it reads SKIYTDKDSN…GATRAGVIPT (181 aa). NADP(+) is bound by residues 28–31, Ser56, and 86–89; these read YGSQ and DMVQ. Residue His111 is part of the active site. Position 137 (Gly137) interacts with NADP(+). The 146-residue stretch at 186 to 331 folds into the KARI C-terminal knotted domain; the sequence is TFKEETETDL…NQLKDLIQKG (146 aa). Asp194, Glu198, Glu230, and Glu234 together coordinate Mg(2+). A substrate-binding site is contributed by Ser255.

This sequence belongs to the ketol-acid reductoisomerase family. Mg(2+) is required as a cofactor.

The catalysed reaction is (2R)-2,3-dihydroxy-3-methylbutanoate + NADP(+) = (2S)-2-acetolactate + NADPH + H(+). It carries out the reaction (2R,3R)-2,3-dihydroxy-3-methylpentanoate + NADP(+) = (S)-2-ethyl-2-hydroxy-3-oxobutanoate + NADPH + H(+). It functions in the pathway amino-acid biosynthesis; L-isoleucine biosynthesis; L-isoleucine from 2-oxobutanoate: step 2/4. The protein operates within amino-acid biosynthesis; L-valine biosynthesis; L-valine from pyruvate: step 2/4. Functionally, involved in the biosynthesis of branched-chain amino acids (BCAA). Catalyzes an alkyl-migration followed by a ketol-acid reduction of (S)-2-acetolactate (S2AL) to yield (R)-2,3-dihydroxy-isovalerate. In the isomerase reaction, S2AL is rearranged via a Mg-dependent methyl migration to produce 3-hydroxy-3-methyl-2-ketobutyrate (HMKB). In the reductase reaction, this 2-ketoacid undergoes a metal-dependent reduction by NADPH to yield (R)-2,3-dihydroxy-isovalerate. The chain is Ketol-acid reductoisomerase (NADP(+)) from Saccharolobus islandicus (strain Y.G.57.14 / Yellowstone #1) (Sulfolobus islandicus).